The following is a 313-amino-acid chain: tRNA dimethylallyltransferase (313 aa).

11 to 18 contacts ATP; sequence GPTASGKT. A substrate-binding site is contributed by 13–18; it reads TASGKT. 3 interaction with substrate tRNA regions span residues 36-39, 160-164, and 241-246; these read DSAL, QRINR, and RCVGYR.

The protein belongs to the IPP transferase family. In terms of assembly, monomer. Mg(2+) serves as cofactor.

The enzyme catalyses adenosine(37) in tRNA + dimethylallyl diphosphate = N(6)-dimethylallyladenosine(37) in tRNA + diphosphate. Functionally, catalyzes the transfer of a dimethylallyl group onto the adenine at position 37 in tRNAs that read codons beginning with uridine, leading to the formation of N6-(dimethylallyl)adenosine (i(6)A). In Haemophilus ducreyi (strain 35000HP / ATCC 700724), this protein is tRNA dimethylallyltransferase.